Consider the following 465-residue polypeptide: Chromosomal replication initiator protein DnaA (465 aa).

The tract at residues methionine 1–glutamate 87 is domain I, interacts with DnaA modulators. The interval serine 81 to serine 123 is disordered. Residues glutamine 88–proline 100 show a composition bias toward low complexity. The tract at residues glutamine 88–lysine 127 is domain II. The interval leucine 128–serine 345 is domain III, AAA+ region. 4 residues coordinate ATP: glycine 173, glycine 175, lysine 176, and threonine 177. The segment at arginine 346–serine 465 is domain IV, binds dsDNA.

Belongs to the DnaA family. In terms of assembly, oligomerizes as a right-handed, spiral filament on DNA at oriC.

The protein resides in the cytoplasm. Functionally, plays an essential role in the initiation and regulation of chromosomal replication. ATP-DnaA binds to the origin of replication (oriC) to initiate formation of the DNA replication initiation complex once per cell cycle. Binds the DnaA box (a 9 base pair repeat at the origin) and separates the double-stranded (ds)DNA. Forms a right-handed helical filament on oriC DNA; dsDNA binds to the exterior of the filament while single-stranded (ss)DNA is stabiized in the filament's interior. The ATP-DnaA-oriC complex binds and stabilizes one strand of the AT-rich DNA unwinding element (DUE), permitting loading of DNA polymerase. After initiation quickly degrades to an ADP-DnaA complex that is not apt for DNA replication. Binds acidic phospholipids. This Acinetobacter baumannii (strain SDF) protein is Chromosomal replication initiator protein DnaA.